The sequence spans 38 residues: Large ribosomal subunit protein bL36 (38 aa).

It belongs to the bacterial ribosomal protein bL36 family.

This chain is Large ribosomal subunit protein bL36, found in Pelodictyon phaeoclathratiforme (strain DSM 5477 / BU-1).